Reading from the N-terminus, the 515-residue chain is GMP synthase [glutamine-hydrolyzing] (515 aa).

One can recognise a Glutamine amidotransferase type-1 domain in the interval 10–200; that stretch reads TIIVLDFGSQ…VFGVCGCSEG (191 aa). Cys87 serves as the catalytic Nucleophile. Catalysis depends on residues His174 and Glu176. The GMPS ATP-PPase domain occupies 201-390; that stretch reads WNMENFIEVE…LGIPDEIVWR (190 aa). An ATP-binding site is contributed by 228 to 234; it reads SGGVDSS.

As to quaternary structure, homodimer.

It catalyses the reaction XMP + L-glutamine + ATP + H2O = GMP + L-glutamate + AMP + diphosphate + 2 H(+). Its pathway is purine metabolism; GMP biosynthesis; GMP from XMP (L-Gln route): step 1/1. In terms of biological role, catalyzes the synthesis of GMP from XMP. The polypeptide is GMP synthase [glutamine-hydrolyzing] (Bacillus thuringiensis subsp. konkukian (strain 97-27)).